We begin with the raw amino-acid sequence, 101 residues long: NADH-quinone oxidoreductase subunit K (101 aa).

Helical transmembrane passes span 4-24 (LSHY…GIFI), 30-50 (IVIL…LVAF), and 65-85 (FVLT…VVFF).

It belongs to the complex I subunit 4L family. In terms of assembly, NDH-1 is composed of 14 different subunits. Subunits NuoA, H, J, K, L, M, N constitute the membrane sector of the complex.

Its subcellular location is the cell inner membrane. It catalyses the reaction a quinone + NADH + 5 H(+)(in) = a quinol + NAD(+) + 4 H(+)(out). Functionally, NDH-1 shuttles electrons from NADH, via FMN and iron-sulfur (Fe-S) centers, to quinones in the respiratory chain. The immediate electron acceptor for the enzyme in this species is believed to be ubiquinone. Couples the redox reaction to proton translocation (for every two electrons transferred, four hydrogen ions are translocated across the cytoplasmic membrane), and thus conserves the redox energy in a proton gradient. This is NADH-quinone oxidoreductase subunit K from Methylobacterium sp. (strain 4-46).